The following is a 314-amino-acid chain: Olfactory receptor 1E2 (314 aa).

Residues methionine 1–asparagine 25 lie on the Extracellular side of the membrane. N-linked (GlcNAc...) asparagine glycosylation occurs at asparagine 5. Residues leucine 26–isoleucine 49 traverse the membrane as a helical segment. The Cytoplasmic portion of the chain corresponds to arginine 50–threonine 57. Residues proline 58 to proline 79 traverse the membrane as a helical segment. Topologically, residues lysine 80–glutamine 100 are extracellular. Cysteines 97 and 189 form a disulfide. Residues methionine 101–tyrosine 120 form a helical membrane-spanning segment. Residues aspartate 121–methionine 139 are Cytoplasmic-facing. Residues leucine 140 to leucine 158 traverse the membrane as a helical segment. At histidine 159 to asparagine 195 the chain is on the extracellular side. Residues glutamate 196–alanine 219 form a helical membrane-spanning segment. Residues arginine 220 to lysine 236 lie on the Cytoplasmic side of the membrane. The helical transmembrane segment at alanine 237–tyrosine 259 threads the bilayer. Residues leucine 260–threonine 272 lie on the Extracellular side of the membrane. The N-linked (GlcNAc...) asparagine glycan is linked to asparagine 265. Residues valine 273–leucine 292 form a helical membrane-spanning segment. Topologically, residues arginine 293–leucine 314 are cytoplasmic.

Belongs to the G-protein coupled receptor 1 family.

It localises to the cell membrane. Odorant receptor. In Gorilla gorilla gorilla (Western lowland gorilla), this protein is Olfactory receptor 1E2 (OR1E2).